The following is a 342-amino-acid chain: N-acetyl-gamma-glutamyl-phosphate reductase (342 aa).

The active site involves Cys-149.

The protein belongs to the NAGSA dehydrogenase family. Type 1 subfamily.

It is found in the cytoplasm. The catalysed reaction is N-acetyl-L-glutamate 5-semialdehyde + phosphate + NADP(+) = N-acetyl-L-glutamyl 5-phosphate + NADPH + H(+). It functions in the pathway amino-acid biosynthesis; L-arginine biosynthesis; N(2)-acetyl-L-ornithine from L-glutamate: step 3/4. Its function is as follows. Catalyzes the NADPH-dependent reduction of N-acetyl-5-glutamyl phosphate to yield N-acetyl-L-glutamate 5-semialdehyde. The sequence is that of N-acetyl-gamma-glutamyl-phosphate reductase from Paracoccus denitrificans (strain Pd 1222).